We begin with the raw amino-acid sequence, 1335 residues long: Bifunctional autolysin (1335 aa).

The first 29 residues, Met-1–Ala-29, serve as a signal peptide directing secretion. Disordered stretches follow at residues Gln-51–Thr-88, Asn-100–Glu-262, and Trp-514–Leu-535. Composition is skewed to polar residues over residues Glu-58–Thr-88, Asn-100–Asn-127, Thr-143–Ala-155, Thr-176–Gly-223, and Ser-244–Tyr-258. An N-acetylmuramoyl-L-alanine amidase region spans residues Val-303–Lys-863. Over residues Gly-515–Thr-531 the composition is skewed to low complexity. 7 GW domains span residues Asn-533–Ala-610, Ala-612–Lys-686, Thr-700–Ala-774, Ser-776–Lys-850, Ser-868–Ile-943, Lys-945–Thr-1020, and Gln-1023–Ile-1096. Residues Gln-864–Lys-1335 are endo-beta-N-acetylglucosaminidase.

The protein in the N-terminal section; belongs to the N-acetylmuramoyl-L-alanine amidase 2 family. It in the C-terminal section; belongs to the glycosyl hydrolase 73 family. In terms of assembly, oligomer; forms a ring structure at the cell surface which is important for efficient partitioning of daughter cells after cell division. Undergoes proteolytic processing to generate the two extracellular lytic enzymes, probably at the septal region on the cell surface.

The protein resides in the secreted. It carries out the reaction Hydrolyzes the link between N-acetylmuramoyl residues and L-amino acid residues in certain cell-wall glycopeptides.. The catalysed reaction is an N(4)-(oligosaccharide-(1-&gt;3)-[oligosaccharide-(1-&gt;6)]-beta-D-Man-(1-&gt;4)-beta-D-GlcNAc-(1-&gt;4)-alpha-D-GlcNAc)-L-asparaginyl-[protein] + H2O = an oligosaccharide-(1-&gt;3)-[oligosaccharide-(1-&gt;6)]-beta-D-Man-(1-&gt;4)-D-GlcNAc + N(4)-(N-acetyl-beta-D-glucosaminyl)-L-asparaginyl-[protein]. Its function is as follows. Endohydrolysis of the di-N-acetylchitobiosyl unit in high-mannose glycopeptides and glycoproteins containing the -[(Man)5(GlcNAc)2]-Asn structure. One N-acetyl-D-glucosamine residue remains attached to the protein; the rest of the oligosaccharide is released intact. Cleaves the peptidoglycan connecting the daughter cells at the end of the cell division cycle, resulting in the separation of the two newly divided cells. Acts as an autolysin in penicillin-induced lysis. As a bacterial surface-associated protein, mediates attachment to polystyrene surfaces, contributing to biofilm formation. Also has vitronectin-binding activity. The chain is Bifunctional autolysin (atl) from Staphylococcus epidermidis.